The sequence spans 660 residues: Polycomb protein SCMH1 (660 aa).

MBT repeat units lie at residues 28 to 126 (FTWD…LQPP) and 134 to 235 (SSWP…LQPP). The disordered stretch occupies residues 233–345 (QPPGTKVVIP…EPDTSTVPQD (113 aa)). 2 stretches are compositionally biased toward basic residues: residues 273–284 (RGRKPGKKRGRT) and 305–320 (FPKK…RKPR). Residues 330–343 (PTTSTPEPDTSTVP) are compositionally biased toward low complexity. Positions 593–658 (WTVEDVMQFV…SYHIDRLKQG (66 aa)) constitute an SAM domain.

This sequence belongs to the SCM family. As to quaternary structure, interacts with the SAM domain of PHC1 via its SAM domain in vitro. Associates with a PRC1-like complex. Strongly expressed in heart, muscle and pancreas. Weakly expressed in brain, placenta, lung, liver and kidney.

Its subcellular location is the nucleus. Its function is as follows. Associates with Polycomb group (PcG) multiprotein complexes; the complex class is required to maintain the transcriptionally repressive state of some genes. The protein is Polycomb protein SCMH1 of Homo sapiens (Human).